Consider the following 99-residue polypeptide: UPF0386 protein mll0189 (99 aa).

The protein belongs to the UPF0386 family.

This Mesorhizobium japonicum (strain LMG 29417 / CECT 9101 / MAFF 303099) (Mesorhizobium loti (strain MAFF 303099)) protein is UPF0386 protein mll0189.